The primary structure comprises 468 residues: MSHQSELIETDIDAYLAQHERKELLRFLTCGSVDDGKSTLIGRLLHDSKMIYEDQLAAVASDTTKHGTTGEKIDLALLVDGLQAEREQGITIDVAYRYFSTAKRKFIIADTPGHEQYTRNMATGASTCDLAVILIDARYGVQTQTRRHSYIASLLGIKHVVVAINKMDLVEFSESRFEEIKQSYLDLSKSLNPAELHFVPMSALDGDNVVNISERTPWYSGKSLMQILETVEIASDKNADDFRFPVQFVNRPNLNFRGFCGTVASGVVKVGDKVKALPSGKTSTVKSIVTFDGELDEAFVGQAVTLTLADEIDISRGDMVVLADSEQTLSNRLRAHLVWMSEAELKPGKQYLFKFASKVTPGVVADIEYRVDVNTFEKSEESAMQLNDIAVVDVQLEQEVVVDAYQKNRATGAFIVIDRLTNITVGAGMAIEALASAAATKGDYSEFEVELNALVRKHFPHWDAKKIG.

In terms of domain architecture, tr-type G spans 22–239 (KELLRFLTCG…TVEIASDKNA (218 aa)). Positions 31–38 (GSVDDGKS) are G1. Residue 31–38 (GSVDDGKS) coordinates GTP. The G2 stretch occupies residues 89–93 (GITID). The G3 stretch occupies residues 110-113 (DTPG). GTP contacts are provided by residues 110–114 (DTPGH) and 165–168 (NKMD). Positions 165 to 168 (NKMD) are G4. The tract at residues 202-204 (SAL) is G5.

The protein belongs to the TRAFAC class translation factor GTPase superfamily. Classic translation factor GTPase family. CysN/NodQ subfamily. Heterodimer composed of CysD, the smaller subunit, and CysN.

The catalysed reaction is sulfate + ATP + H(+) = adenosine 5'-phosphosulfate + diphosphate. It participates in sulfur metabolism; hydrogen sulfide biosynthesis; sulfite from sulfate: step 1/3. In terms of biological role, with CysD forms the ATP sulfurylase (ATPS) that catalyzes the adenylation of sulfate producing adenosine 5'-phosphosulfate (APS) and diphosphate, the first enzymatic step in sulfur assimilation pathway. APS synthesis involves the formation of a high-energy phosphoric-sulfuric acid anhydride bond driven by GTP hydrolysis by CysN coupled to ATP hydrolysis by CysD. The polypeptide is Sulfate adenylyltransferase subunit 1 (Teredinibacter turnerae (strain ATCC 39867 / T7901)).